A 175-amino-acid polypeptide reads, in one-letter code: Thioredoxin M3, chloroplastic (175 aa).

A chloroplast-targeting transit peptide spans 1 to 59 (MAATATACPAPPPPRSLYRGVALAAPGRRRAGYGASSSAARRWPGCRRRWAAHRIRTVS). The Thioredoxin domain occupies 61 to 171 (AYSPRGAKTI…YVRAIEKSIS (111 aa)). Residues C95 and C98 each act as nucleophile in the active site. Cysteines 95 and 98 form a disulfide.

The protein belongs to the thioredoxin family. Plant M-type subfamily.

The protein resides in the plastid. Its subcellular location is the chloroplast. In terms of biological role, probable thiol-disulfide oxidoreductase that may be involved in the redox regulation of chloroplastic enzymes. The sequence is that of Thioredoxin M3, chloroplastic from Oryza sativa subsp. japonica (Rice).